Here is a 94-residue protein sequence, read N- to C-terminus: Protein translocase subunit SecE (94 aa).

Residues 1-32 (MTDAVGSIDTPDAQDEVPESKKTRKGGKRAKK) form a disordered region. A compositionally biased stretch (basic residues) spans 22 to 32 (KTRKGGKRAKK). The chain crosses the membrane as a helical span at residues 59 to 81 (QLTSYTTVVIFFVAIMIRLVTVI).

The protein belongs to the SecE/SEC61-gamma family. As to quaternary structure, component of the Sec protein translocase complex. Heterotrimer consisting of SecY, SecE and SecG subunits. The heterotrimers can form oligomers, although 1 heterotrimer is thought to be able to translocate proteins. Interacts with the ribosome. Interacts with SecDF, and other proteins may be involved. Interacts with SecA.

The protein localises to the cell membrane. Functionally, essential subunit of the Sec protein translocation channel SecYEG. Clamps together the 2 halves of SecY. May contact the channel plug during translocation. The sequence is that of Protein translocase subunit SecE from Streptomyces galbus.